The primary structure comprises 305 residues: Probable cell division protein WhiA (305 aa).

Residues 272–305 (SIQQLADSLTVPITKSGVNHRLRKINKIADELTD) constitute a DNA-binding region (H-T-H motif).

The protein belongs to the WhiA family.

In terms of biological role, involved in cell division and chromosome segregation. This is Probable cell division protein WhiA from Streptococcus suis (strain 98HAH33).